A 391-amino-acid polypeptide reads, in one-letter code: Nucleosome assembly protein 1-like 1 (391 aa).

At Met1 the chain carries N-acetylmethionine. The segment covering 1–10 (MADIDNKEQS) has biased composition (basic and acidic residues). The segment at 1–32 (MADIDNKEQSELDQDLDDVEEVEEEETGEETK) is disordered. Ala2 carries the N-acetylalanine modification. Ser10 bears the Phosphoserine mark. Acidic residues predominate over residues 11–28 (ELDQDLDDVEEVEEEETG). Phosphothreonine occurs at positions 62 and 64. Ser69 is subject to Phosphoserine. Lys116 bears the N6-acetyllysine mark. An NAP1L motif motif is present at residues 125–150 (YEPTEEECEWKPDEEDEISEELKEKA). Positions 132–143 (CEWKPDEEDEIS) are enriched in acidic residues. The interval 132-163 (CEWKPDEEDEISEELKEKAKIEDEKKDEEKED) is disordered. Ser143 carries the post-translational modification Phosphoserine. Positions 144–163 (EELKEKAKIEDEKKDEEKED) are enriched in basic and acidic residues. A Nuclear localization signal motif is present at residues 273-279 (IKKKQKH). Residues 346–376 (AIEDDDDDYDEEGEEADEEGEEEGDEENDPD) are compositionally biased toward acidic residues. Residues 346–391 (AIEDDDDDYDEEGEEADEEGEEEGDEENDPDYDPKKDQNPAECKQQ) form a disordered region. Residues 377 to 391 (YDPKKDQNPAECKQQ) are compositionally biased toward basic and acidic residues. Cys388 carries the post-translational modification Cysteine methyl ester. Cys388 is lipidated: S-farnesyl cysteine. Residues 389–391 (KQQ) constitute a propeptide, removed in mature form.

Belongs to the nucleosome assembly protein (NAP) family. Homodimer. The dimer binds strongly and sequentially to single and double H2A-H2B heterodimers. Interacts with ERCC6; this interaction increases ERCC6 processivity. Interacts with RAD54. Interacts with SETD1A. In terms of assembly, (Microbial infection) Interacts with human herpesvirus 8 protein LANA1 (via N-terminus); this interaction is required for LANA1-dependent DNA replication. As to quaternary structure, (Microbial infection) Interacts with hepatitis virus protein NS5A (via C-terminus); this interaction sequesters NAP1L1 in the cytoplasm, blocking its nuclear translocation. (Microbial infection) Interacts with Chikungunya virus non-structural protein 3 (via C-terminus). Monoglycylated on glutamate residues. Cannot be polyglycylated due to the absence of functional TTLL10 in human. Post-translationally, polyglutamylated by TTLL4 on glutamate residues, resulting in polyglutamate chains on the gamma-carboxyl group. Both polyglutamylation and monoglycylation modifications can coexist on the same protein on adjacent residues, and lowering polyglycylation levels increases polyglutamylation, and reciprocally. In terms of tissue distribution, ubiquitously expressed.

The protein resides in the nucleus. It is found in the melanosome. It localises to the cytoplasm. Histone chaperone that plays a role in the nuclear import of H2A-H2B and nucleosome assembly. Also participates in several important DNA repair mechanisms: greatly enhances ERCC6-mediated chromatin remodeling which is essential for transcription-coupled nucleotide excision DNA repair. Also stimulates homologous recombination (HR) by RAD51 and RAD54 which is essential in mitotic DNA double strand break (DSB) repair. Plays a key role in the regulation of embryonic neurogenesis. Promotes the proliferation of neural progenitors and inhibits neuronal differentiation during cortical development. Regulates neurogenesis via the modulation of RASSF10; regulates RASSF10 expression by promoting SETD1A-mediated H3K4 methylation at the RASSF10 promoter. Its function is as follows. (Microbial infection) Positively regulates Epstein-Barr virus reactivation in epithelial cells through the induction of viral BZLF1 expression. In terms of biological role, (Microbial infection) Together with human herpesvirus 8 protein LANA1, assists the proper assembly of the nucleosome on the replicated viral DNA. This chain is Nucleosome assembly protein 1-like 1 (NAP1L1), found in Homo sapiens (Human).